Here is a 78-residue protein sequence, read N- to C-terminus: ATP synthase subunit c (78 aa).

Helical transmembrane passes span 9-29 (AFIG…GQGW) and 56-76 (AAVT…LVFV).

The protein belongs to the ATPase C chain family. As to quaternary structure, F-type ATPases have 2 components, F(1) - the catalytic core - and F(0) - the membrane proton channel. F(1) has five subunits: alpha(3), beta(3), gamma(1), delta(1), epsilon(1). F(0) has three main subunits: a(1), b(2) and c(10-14). The alpha and beta chains form an alternating ring which encloses part of the gamma chain. F(1) is attached to F(0) by a central stalk formed by the gamma and epsilon chains, while a peripheral stalk is formed by the delta and b chains.

It localises to the cell membrane. F(1)F(0) ATP synthase produces ATP from ADP in the presence of a proton or sodium gradient. F-type ATPases consist of two structural domains, F(1) containing the extramembraneous catalytic core and F(0) containing the membrane proton channel, linked together by a central stalk and a peripheral stalk. During catalysis, ATP synthesis in the catalytic domain of F(1) is coupled via a rotary mechanism of the central stalk subunits to proton translocation. Functionally, key component of the F(0) channel; it plays a direct role in translocation across the membrane. A homomeric c-ring of between 10-14 subunits forms the central stalk rotor element with the F(1) delta and epsilon subunits. The chain is ATP synthase subunit c from Malacoplasma penetrans (strain HF-2) (Mycoplasma penetrans).